We begin with the raw amino-acid sequence, 169 residues long: Cilia- and flagella-associated protein 276 (169 aa).

Disordered stretches follow at residues 26–45 (SKKL…EPWS) and 150–169 (HTAA…FFST). Residues 36–45 (HLAQQQEPWS) are compositionally biased toward polar residues. The span at 160 to 169 (RKKDGGFFST) shows a compositional bias: basic and acidic residues.

In terms of assembly, microtubule inner protein component of sperm flagellar doublet microtubules. As to expression, expressed in cerebrum, cerebellum, gastrocnemius muscle, spinal cord and lung tissues.

It is found in the cytoplasm. The protein resides in the cytoskeleton. The protein localises to the flagellum axoneme. It localises to the cilium axoneme. In terms of biological role, microtubule inner protein (MIP) part of the dynein-decorated doublet microtubules (DMTs) in cilia axoneme, which is required for motile cilia beating. May play an important role for the maintenance of myelin-axon integrity. May affect intracellular Ca(2+) homeostasis. This Homo sapiens (Human) protein is Cilia- and flagella-associated protein 276.